We begin with the raw amino-acid sequence, 55 residues long: uncharacterized protein (55 aa).

This is an uncharacterized protein from Rickettsia prowazekii (strain Madrid E).